A 575-amino-acid polypeptide reads, in one-letter code: Potassium-transporting ATPase potassium-binding subunit (575 aa).

A run of 12 helical transmembrane segments spans residues 4-24, 61-81, 133-153, 180-200, 258-278, 289-309, 344-364, 372-392, 394-414, 431-451, 499-519, and 545-565; these read SAWGLLALFLAALLVLAWPVG, LRYAIALLAFNAVGAVFVYAL, GLAVQNFFSAATGIAVAFALI, LWVLVPLSFVLAVFFVSQGVI, LANLLQMIAVFLIPAALCFAF, WAVLAAMTVMFVAAVMVVIPA, IDASALFAAVTTAASCGAVIA, LGGMVPMVLMQLGEVVFGGVG, GLYGMLIFAMLAVFIAGLMIG, LISIAILVTPVLVLAGTAVAV, LLGLAMWLGRFAVIVPVLAIA, and LLIGTVLLVGLLNYVPALALG.

The protein belongs to the KdpA family. The system is composed of three essential subunits: KdpA, KdpB and KdpC.

The protein resides in the cell inner membrane. Part of the high-affinity ATP-driven potassium transport (or Kdp) system, which catalyzes the hydrolysis of ATP coupled with the electrogenic transport of potassium into the cytoplasm. This subunit binds the periplasmic potassium ions and delivers the ions to the membrane domain of KdpB through an intramembrane tunnel. The sequence is that of Potassium-transporting ATPase potassium-binding subunit from Variovorax paradoxus (strain S110).